The following is a 270-amino-acid chain: Methylthioribulose-1-phosphate dehydratase (270 aa).

Cys122 serves as a coordination point for substrate. Positions 140 and 142 each coordinate Zn(2+). The Proton donor/acceptor role is filled by Glu165. Position 230 (His230) interacts with Zn(2+).

It belongs to the aldolase class II family. MtnB subfamily. Zn(2+) is required as a cofactor.

The protein localises to the cytoplasm. The catalysed reaction is 5-(methylsulfanyl)-D-ribulose 1-phosphate = 5-methylsulfanyl-2,3-dioxopentyl phosphate + H2O. Its pathway is amino-acid biosynthesis; L-methionine biosynthesis via salvage pathway; L-methionine from S-methyl-5-thio-alpha-D-ribose 1-phosphate: step 2/6. Catalyzes the dehydration of methylthioribulose-1-phosphate (MTRu-1-P) into 2,3-diketo-5-methylthiopentyl-1-phosphate (DK-MTP-1-P). This is Methylthioribulose-1-phosphate dehydratase from Candida albicans (strain SC5314 / ATCC MYA-2876) (Yeast).